Here is a 164-residue protein sequence, read N- to C-terminus: Phosphohistidine phosphatase SixA homolog (164 aa).

The protein belongs to the SixA phosphatase family.

This Haemophilus influenzae (strain ATCC 51907 / DSM 11121 / KW20 / Rd) protein is Phosphohistidine phosphatase SixA homolog (sixA-A).